Consider the following 397-residue polypeptide: DnaJ homolog subfamily A member 1 (397 aa).

A J domain is found at 6–68 (TYYDVLGVKP…KKRELYDKGG (63 aa)). At Lys-66 the chain carries N6-acetyllysine. Residue Ser-83 is modified to Phosphoserine. The segment at 121–205 (GATRKLALQK…CNGRKIVREK (85 aa)) adopts a CR-type zinc-finger fold. Residues Cys-134, Cys-137, Cys-150, Cys-153, Cys-177, Cys-180, Cys-193, and Cys-196 each contribute to the Zn(2+) site. CXXCXGXG motif repeat units follow at residues 134–141 (CDKCEGRG), 150–157 (CPNCRGTG), 177–184 (CMECQGHG), and 193–200 (CKSCNGRK). Phosphoserine is present on Ser-335. Residues 352–397 (VEETDEMDQVELVDFDPNQERRRHYNGEAYEDDEHHPRGGVQCQTS) are disordered. The span at 353–365 (EETDEMDQVELVD) shows a compositional bias: acidic residues. Tyr-381 carries the phosphotyrosine modification. Residue Cys-394 is modified to Cysteine methyl ester. Residue Cys-394 is the site of S-farnesyl cysteine attachment. The propeptide at 395 to 397 (QTS) is removed in mature form.

Identified in a complex with HSPA1B and BAX. Interacts with RNF207.

It localises to the membrane. The protein resides in the cytoplasm. It is found in the microsome. The protein localises to the mitochondrion. Its subcellular location is the nucleus. It localises to the perinuclear region. Its function is as follows. Co-chaperone for HSPA8/Hsc70. Plays a role in protein transport into mitochondria via its role as co-chaperone. Functions as co-chaperone for HSPA1B and negatively regulates the translocation of BAX from the cytosol to mitochondria in response to cellular stress, thereby protecting cells against apoptosis. Stimulates ATP hydrolysis, but not the folding of unfolded proteins mediated by HSPA1A (in vitro). Promotes apoptosis in response to cellular stress mediated by exposure to anisomycin or UV. The chain is DnaJ homolog subfamily A member 1 (DNAJA1) from Chlorocebus aethiops (Green monkey).